The sequence spans 577 residues: Copine-8 (577 aa).

2 consecutive C2 domains span residues 19–146 (TSAT…RLEK) and 155–278 (KCGT…FNVY). Residues aspartate 52, aspartate 58, aspartate 112, aspartate 114, serine 117, lysine 122, aspartate 124, aspartate 186, aspartate 192, aspartate 248, aspartate 250, and aspartate 256 each coordinate Ca(2+). Serine 273 carries the phosphoserine modification. A VWFA domain is found at 322–523 (NFTVAIDFTA…VQFVPFRDYI (202 aa)).

Belongs to the copine family. Requires Ca(2+) as cofactor.

Its function is as follows. Probable calcium-dependent phospholipid-binding protein that may play a role in calcium-mediated intracellular processes. The polypeptide is Copine-8 (Mus musculus (Mouse)).